Consider the following 275-residue polypeptide: Large ribosomal subunit protein uL2c (275 aa).

The segment at 222–258 (GSAMNPVDHPHGGGEGRAPIGRARPVSPWGRPALGAK) is disordered.

It belongs to the universal ribosomal protein uL2 family. In terms of assembly, part of the 50S ribosomal subunit.

It is found in the plastid. The protein resides in the chloroplast. This is Large ribosomal subunit protein uL2c (rpl2) from Chlorella vulgaris (Green alga).